The sequence spans 934 residues: Protein translocase subunit SecA (934 aa).

ATP is bound by residues Q87, 105–109, and D515; that span reads GEGKT. Residues C918, C920, C929, and H930 each contribute to the Zn(2+) site.

This sequence belongs to the SecA family. As to quaternary structure, monomer and homodimer. Part of the essential Sec protein translocation apparatus which comprises SecA, SecYEG and auxiliary proteins SecDF-YajC and YidC. Zn(2+) serves as cofactor.

The protein localises to the cell inner membrane. Its subcellular location is the cytoplasm. The enzyme catalyses ATP + H2O + cellular proteinSide 1 = ADP + phosphate + cellular proteinSide 2.. In terms of biological role, part of the Sec protein translocase complex. Interacts with the SecYEG preprotein conducting channel. Has a central role in coupling the hydrolysis of ATP to the transfer of proteins into and across the cell membrane, serving both as a receptor for the preprotein-SecB complex and as an ATP-driven molecular motor driving the stepwise translocation of polypeptide chains across the membrane. The chain is Protein translocase subunit SecA from Ralstonia nicotianae (strain ATCC BAA-1114 / GMI1000) (Ralstonia solanacearum).